The sequence spans 134 residues: Small ribosomal subunit protein uS11 (134 aa).

2 disordered regions span residues methionine 1 to glycine 24 and isoleucine 115 to valine 134. Residues alanine 9 to lysine 18 show a composition bias toward basic residues.

Belongs to the universal ribosomal protein uS11 family. Part of the 30S ribosomal subunit. Interacts with proteins S7 and S18. Binds to IF-3.

Its function is as follows. Located on the platform of the 30S subunit, it bridges several disparate RNA helices of the 16S rRNA. Forms part of the Shine-Dalgarno cleft in the 70S ribosome. The protein is Small ribosomal subunit protein uS11 of Saccharopolyspora erythraea (strain ATCC 11635 / DSM 40517 / JCM 4748 / NBRC 13426 / NCIMB 8594 / NRRL 2338).